A 135-amino-acid polypeptide reads, in one-letter code: Ribosome-binding factor A (135 aa).

The protein belongs to the RbfA family. As to quaternary structure, monomer. Binds 30S ribosomal subunits, but not 50S ribosomal subunits or 70S ribosomes.

The protein resides in the cytoplasm. One of several proteins that assist in the late maturation steps of the functional core of the 30S ribosomal subunit. Associates with free 30S ribosomal subunits (but not with 30S subunits that are part of 70S ribosomes or polysomes). Required for efficient processing of 16S rRNA. May interact with the 5'-terminal helix region of 16S rRNA. This is Ribosome-binding factor A from Aliivibrio fischeri (strain ATCC 700601 / ES114) (Vibrio fischeri).